The following is a 324-amino-acid chain: D-alanine--D-alanine ligase (324 aa).

In terms of domain architecture, ATP-grasp spans 116–311 (KQVWHTLGIP…FQQLVLAILA (196 aa)). 142–197 (ATELGFPLIVKPAHEGSSIGMAKVSSASELIDAWKAASTYDSQVLVEQWIHGPEFT) contacts ATP. The Mg(2+) site is built by Asp265, Glu278, and Asn280.

It belongs to the D-alanine--D-alanine ligase family. Mg(2+) serves as cofactor. The cofactor is Mn(2+).

The protein resides in the cytoplasm. The enzyme catalyses 2 D-alanine + ATP = D-alanyl-D-alanine + ADP + phosphate + H(+). It functions in the pathway cell wall biogenesis; peptidoglycan biosynthesis. Cell wall formation. In Pseudomonas fluorescens (strain Pf0-1), this protein is D-alanine--D-alanine ligase.